A 158-amino-acid polypeptide reads, in one-letter code: Placenta growth factor (158 aa).

A signal peptide (or 26) is located at residues 1 to 23 (MLAMKLFTCFLQVLAGLAVHSQG). N29 and N30 each carry an N-linked (GlcNAc...) asparagine glycan. 3 disulfides stabilise this stretch: C48/C90, C79/C125, and C83/C127. An N-linked (GlcNAc...) asparagine glycan is attached at N97. A disordered region spans residues 136-158 (AERRKTKGKRKQSKTPQTEEPHL). Positions 137–148 (ERRKTKGKRKQS) are enriched in basic residues.

Belongs to the PDGF/VEGF growth factor family. As to quaternary structure, antiparallel homodimer; disulfide-linked. Also found as heterodimer with VEGFA/VEGF.

It is found in the secreted. Its function is as follows. Growth factor active in angiogenesis and endothelial cell growth, stimulating their proliferation and migration. It binds to the receptor FLT1/VEGFR-1. Also promotes cell tumor growth. The polypeptide is Placenta growth factor (Pgf) (Rattus norvegicus (Rat)).